Reading from the N-terminus, the 83-residue chain is MALLDFFLSRNKNTAHVAKERLQIIVAEQRKFKSEPDYLPQLKREILSVICKYVNIDPHMVTIQLEQKNEDISVLELNIILPD.

The protein belongs to the MinE family.

Functionally, prevents the cell division inhibition by proteins MinC and MinD at internal division sites while permitting inhibition at polar sites. This ensures cell division at the proper site by restricting the formation of a division septum at the midpoint of the long axis of the cell. The polypeptide is Cell division topological specificity factor (Buchnera aphidicola subsp. Schizaphis graminum (strain Sg)).